We begin with the raw amino-acid sequence, 258 residues long: 3-deoxy-manno-octulosonate cytidylyltransferase (258 aa).

It belongs to the KdsB family.

It is found in the cytoplasm. The enzyme catalyses 3-deoxy-alpha-D-manno-oct-2-ulosonate + CTP = CMP-3-deoxy-beta-D-manno-octulosonate + diphosphate. Its pathway is nucleotide-sugar biosynthesis; CMP-3-deoxy-D-manno-octulosonate biosynthesis; CMP-3-deoxy-D-manno-octulosonate from 3-deoxy-D-manno-octulosonate and CTP: step 1/1. It participates in bacterial outer membrane biogenesis; lipopolysaccharide biosynthesis. Activates KDO (a required 8-carbon sugar) for incorporation into bacterial lipopolysaccharide in Gram-negative bacteria. In Blochmanniella floridana, this protein is 3-deoxy-manno-octulosonate cytidylyltransferase.